The following is a 142-amino-acid chain: Large ribosomal subunit protein bL17 (142 aa).

This sequence belongs to the bacterial ribosomal protein bL17 family. In terms of assembly, part of the 50S ribosomal subunit. Contacts protein L32.

The chain is Large ribosomal subunit protein bL17 from Chlamydia felis (strain Fe/C-56) (Chlamydophila felis).